Consider the following 645-residue polypeptide: DNA ligase (645 aa).

NAD(+)-binding positions include 30-34, 79-80, and glutamate 106; these read DIEYD and SM. Residue lysine 108 is the N6-AMP-lysine intermediate of the active site. NAD(+) contacts are provided by arginine 129, glutamate 163, and lysine 302. Zn(2+) is bound by residues cysteine 396, cysteine 399, cysteine 412, and cysteine 417. Positions 570-645 constitute a BRCT domain; it reads ISQNVFTKKT…ISEDEFKEML (76 aa).

It belongs to the NAD-dependent DNA ligase family. LigA subfamily. Requires Mg(2+) as cofactor. Mn(2+) is required as a cofactor.

It carries out the reaction NAD(+) + (deoxyribonucleotide)n-3'-hydroxyl + 5'-phospho-(deoxyribonucleotide)m = (deoxyribonucleotide)n+m + AMP + beta-nicotinamide D-nucleotide.. Its function is as follows. DNA ligase that catalyzes the formation of phosphodiester linkages between 5'-phosphoryl and 3'-hydroxyl groups in double-stranded DNA using NAD as a coenzyme and as the energy source for the reaction. It is essential for DNA replication and repair of damaged DNA. In Campylobacter hominis (strain ATCC BAA-381 / DSM 21671 / CCUG 45161 / LMG 19568 / NCTC 13146 / CH001A), this protein is DNA ligase.